Reading from the N-terminus, the 716-residue chain is 1,4-alpha-glucan branching enzyme GlgB (716 aa).

Catalysis depends on aspartate 394, which acts as the Nucleophile. Glutamate 447 functions as the Proton donor in the catalytic mechanism.

The protein belongs to the glycosyl hydrolase 13 family. GlgB subfamily. In terms of assembly, monomer.

The enzyme catalyses Transfers a segment of a (1-&gt;4)-alpha-D-glucan chain to a primary hydroxy group in a similar glucan chain.. It functions in the pathway glycan biosynthesis; glycogen biosynthesis. In terms of biological role, catalyzes the formation of the alpha-1,6-glucosidic linkages in glycogen by scission of a 1,4-alpha-linked oligosaccharide from growing alpha-1,4-glucan chains and the subsequent attachment of the oligosaccharide to the alpha-1,6 position. The sequence is that of 1,4-alpha-glucan branching enzyme GlgB from Photobacterium profundum (strain SS9).